A 72-amino-acid chain; its full sequence is DNA-directed RNA polymerase subunit Rpo10 (72 aa).

Cys-7, Cys-10, Cys-53, and Cys-54 together coordinate Zn(2+).

The protein belongs to the archaeal Rpo10/eukaryotic RPB10 RNA polymerase subunit family. Part of the RNA polymerase complex. The cofactor is Zn(2+).

Its subcellular location is the cytoplasm. The enzyme catalyses RNA(n) + a ribonucleoside 5'-triphosphate = RNA(n+1) + diphosphate. Functionally, DNA-dependent RNA polymerase (RNAP) catalyzes the transcription of DNA into RNA using the four ribonucleoside triphosphates as substrates. The chain is DNA-directed RNA polymerase subunit Rpo10 from Thermoplasma volcanium (strain ATCC 51530 / DSM 4299 / JCM 9571 / NBRC 15438 / GSS1).